We begin with the raw amino-acid sequence, 390 residues long: Phosphopentomutase (390 aa).

Mn(2+) contacts are provided by aspartate 12, aspartate 285, histidine 290, aspartate 326, histidine 327, and histidine 338.

The protein belongs to the phosphopentomutase family. Mn(2+) serves as cofactor.

Its subcellular location is the cytoplasm. It catalyses the reaction 2-deoxy-alpha-D-ribose 1-phosphate = 2-deoxy-D-ribose 5-phosphate. It carries out the reaction alpha-D-ribose 1-phosphate = D-ribose 5-phosphate. The protein operates within carbohydrate degradation; 2-deoxy-D-ribose 1-phosphate degradation; D-glyceraldehyde 3-phosphate and acetaldehyde from 2-deoxy-alpha-D-ribose 1-phosphate: step 1/2. Functionally, isomerase that catalyzes the conversion of deoxy-ribose 1-phosphate (dRib-1-P) and ribose 1-phosphate (Rib-1-P) to deoxy-ribose 5-phosphate (dRib-5-P) and ribose 5-phosphate (Rib-5-P), respectively. In Brevibacillus brevis (strain 47 / JCM 6285 / NBRC 100599), this protein is Phosphopentomutase.